We begin with the raw amino-acid sequence, 493 residues long: Fizzy-related protein homolog (493 aa).

3 disordered regions span residues 31-51 (LTPA…FIPS), 64-88 (INEN…GKDG), and 105-166 (EKVQ…SPRK). Position 32 is a phosphothreonine (Thr32). Residues 32–42 (TPANSPVSSPS) are compositionally biased toward polar residues. Ser36 carries the phosphoserine modification. Lys69 carries the N6-acetyllysine modification. Composition is skewed to basic and acidic residues over residues 76-86 (KAKDATSDNGK) and 106-126 (KVQD…EHKG). Ser133, Ser138, Ser146, and Ser151 each carry phosphoserine. The segment covering 146–160 (SPYSLSPVSNKSQKL) has biased composition (polar residues). An N6-acetyllysine modification is found at Lys159. 7 WD repeats span residues 182-222 (PELQ…VTRL), 227-266 (VEGD…KLSM), 269-306 (GHTA…LQSE), 311-350 (GHRQ…PVQQ), 353-395 (EHLA…PLQC), 397-438 (DTGS…QVAK), and 441-480 (GHSY…RSTK).

Belongs to the WD repeat CDC20/Fizzy family. As to quaternary structure, the unphosphorylated form interacts with APC/C during mitosis. Interacts with NINL. Interacts (in complex with the anaphase promoting complex APC) with MAD2L2; inhibits FZR1-mediated APC/C activation. Interacts with SIRT2. Interacts with USP37. Interacts (via WD repeats) with MAK. Interacts with RBBP8/CtIP; this interaction leads to RBBP8 proteasomal degradation. Interacts with HECW2. Interacts with SASS6; the interaction is regulated by CENATAC and leads to SASS6 proteasomal degradation. Interacts (via N-terminus) with CCNF. Interacts with CDC6. Interacts with TK1 (via the KEN box). In terms of processing, acetylated. Deacetylated by SIRT2 at Lys-69 and Lys-159; deacetylation enhances the interaction of FZR1 with CDC27, leading to activation of anaphase promoting complex/cyclosome (APC/C). Following DNA damage, it is dephosphorylated by CDC14B in G2 phase, leading to its reassociation with the APC/C, and allowing an efficient G2 DNA damage checkpoint. Phosphorylated by MAK.

Its pathway is protein modification; protein ubiquitination. Substrate-specific adapter for the anaphase promoting complex/cyclosome (APC/C) E3 ubiquitin-protein ligase complex. Associates with the APC/C in late mitosis, in replacement of CDC20, and activates the APC/C during anaphase and telophase. The APC/C remains active in degrading substrates to ensure that positive regulators of the cell cycle do not accumulate prematurely. At the G1/S transition FZR1 is phosphorylated, leading to its dissociation from the APC/C. Following DNA damage, it is required for the G2 DNA damage checkpoint: its dephosphorylation and reassociation with the APC/C leads to the ubiquitination of PLK1, preventing entry into mitosis. Acts as an adapter for APC/C to target the DNA-end resection factor RBBP8/CtIP for ubiquitination and subsequent proteasomal degradation. Through the regulation of RBBP8/CtIP protein turnover, may play a role in DNA damage response, favoring DNA double-strand repair through error-prone non-homologous end joining (NHEJ) over error-free, RBBP8-mediated homologous recombination (HR). The protein is Fizzy-related protein homolog (Fzr1) of Mus musculus (Mouse).